A 476-amino-acid chain; its full sequence is Adenosylhomocysteinase (476 aa).

The substrate site is built by Thr62, Asp141, and Glu201. 202 to 204 is a binding site for NAD(+); sequence TTT. Substrate-binding residues include Lys231 and Asp235. NAD(+) is bound by residues Asn236, 265–270, Glu288, Asn323, 344–346, and Asn389; these read GYGDVG and IGH.

This sequence belongs to the adenosylhomocysteinase family. Requires NAD(+) as cofactor.

Its subcellular location is the cytoplasm. It catalyses the reaction S-adenosyl-L-homocysteine + H2O = L-homocysteine + adenosine. It functions in the pathway amino-acid biosynthesis; L-homocysteine biosynthesis; L-homocysteine from S-adenosyl-L-homocysteine: step 1/1. In terms of biological role, may play a key role in the regulation of the intracellular concentration of adenosylhomocysteine. In Delftia acidovorans (strain DSM 14801 / SPH-1), this protein is Adenosylhomocysteinase.